The primary structure comprises 1165 residues: MTEEDRKLTVETETVEAPVANNLLLSNNSNVVAPNPSIPSASTSTSPLHREIVDDSVATANTTSNVVQHNLPTIDNNLMDSDATSHNQDHWHSDINRAGTSMSTSDIPTDLHLEHIGSVSSTNNNSNNALINHNPLSSHLSNPSSSLRNKKSSLLVASNPAFASDVELSKKKPAVISNNMPTSNIALYQTARSANIHGPSSTSASKAFRKASAFSNNTAPSTSNNIGSNTPPAPLLPLPSLSQQNKPKIIERPTMHVTNSREILLGENLLDDTKAKNAPANSTTHDNGPVANDGLRIPNHSNADDNENNNKMKKNKNINSGKNERNDDTSKICTTSTKTAPSTAPLGSTDNTQALTASVSSSNADNHNNNKKKTSSNNNGNNSNSASNKTNADIKNSNADLSASTSNNNAINDDSHESNSEKPTKADFFAARLATAVGENEISDSEETFVYESAANSTKNLIFPDSSSQQQQQQQQPPKQQQQQQNHGITSKISAPLLNNNKKLLSRLKNSRHISTGAILNNTIATISTNPNLNSNVMQNNNNLMSGHNHLDELSSIKQEPPHQLQQQQPPMDVQSVDSYTSDNPDSNVIAKSPDKRSSLVSLSKVSPHLLSSTSSNGNTISCPNVATNSQELEPNNDISTKKSLSNSTLRHSSANRNSNYGDNKRPLRTTVSKIFDSNPNGAPLRRYSGVPDHVNLEDYIEQPHNYPTMQNSVKKDEFYNSRNNKFPHGLNFYGDNNVIEEENNGDSSNVNRPQHTNLQHEFIPEDNESDENDIHSMFYYNHKNDLETKPLISDYGEDEDVDDYDRPNATFNSYYGSASNTHELPLHGRMPSRSNNDYYDFMVGNNTGNNNQLNEYTPLRMKRGQRHLSRTNNSIMNGSIHMNGNDDVTHSNINNNDIVGYSPHNFYSRKSPFVKVKNFLYLAFVISSLLMTGFILGFLLATNKELQDVDVVVMDNVISSSDELIFDITVSAFNPGFFSISVSQVDLDIFAKSSYLKCDSNGDCTVMEQERKILQITTNLSLVEESANNDISGGNIETVLLGTAKKLETPLKFQGGAFNRNYDVSVSSVKLLSPGSREAKHENDDDDDDDGDDGDDENNTNERQYKSKPNARDDKEDDTKKWKLLIKHDYELIVRGSMKYEVPFFNTQKSTAIQKDSMVHPGKK.

Residues 1 to 919 (MTEEDRKLTV…RKSPFVKVKN (919 aa)) lie on the Cytoplasmic side of the membrane. The segment at 118-147 (SVSSTNNNSNNALINHNPLSSHLSNPSSSL) is disordered. Serine 164 is modified (phosphoserine). 4 disordered regions span residues 215–241 (SNNT…LPSL), 274–423 (KAKN…SEKP), 461–497 (LIFP…SAPL), and 560–668 (EPPH…KRPL). Over residues 216-230 (NNTAPSTSNNIGSNT) the composition is skewed to polar residues. The segment covering 334–345 (TTSTKTAPSTAP) has biased composition (low complexity). Positions 346-367 (LGSTDNTQALTASVSSSNADNH) are enriched in polar residues. The segment covering 375-391 (SSNNNGNNSNSASNKTN) has biased composition (low complexity). The segment covering 393-412 (DIKNSNADLSASTSNNNAIN) has biased composition (polar residues). Residues 413 to 423 (DDSHESNSEKP) are compositionally biased toward basic and acidic residues. 2 stretches are compositionally biased toward low complexity: residues 469-485 (QQQQ…QQQQ) and 562-571 (PHQLQQQQPP). Over residues 576 to 587 (SVDSYTSDNPDS) the composition is skewed to polar residues. Low complexity predominate over residues 599–613 (SLVSLSKVSPHLLSS). Residues 614–662 (TSSNGNTISCPNVATNSQELEPNNDISTKKSLSNSTLRHSSANRNSNYG) show a composition bias toward polar residues. A helical; Signal-anchor for type II membrane protein membrane pass occupies residues 920 to 940 (FLYLAFVISSLLMTGFILGFL). Topologically, residues 941 to 1165 (LATNKELQDV…KDSMVHPGKK (225 aa)) are vacuolar. Asparagine 1020 and asparagine 1099 each carry an N-linked (GlcNAc...) asparagine glycan. A disordered region spans residues 1074–1121 (SPGSREAKHENDDDDDDDGDDGDDENNTNERQYKSKPNARDDKEDDTK). Residues 1085–1100 (DDDDDDDGDDGDDENN) show a composition bias toward acidic residues. Positions 1111 to 1121 (NARDDKEDDTK) are enriched in basic and acidic residues.

As to quaternary structure, component of the PI(3,5)P2 regulatory complex, composed of ATG18, FIG4, FAB1, VAC14 and VAC7. VAC14 nucleates the assembly of the complex and serves as a scaffold. In terms of processing, N-glycosylated.

It localises to the vacuole membrane. The PI(3,5)P2 regulatory complex regulates both the synthesis and turnover of phosphatidylinositol 3,5-bisphosphate (PtdIns(3,5)P2). Positively regulates FAB1 kinase activity. Major activator of FAB1 during hyperosmotic shock and can elevate levels of PtdIns(3,5)P2 in the absence of VAC14 and FIG4. Directly involved in vacuolar membrane scission. Required for normal vacuole acidification, inheritance and morphology. The sequence is that of Vacuolar segregation protein 7 (VAC7) from Saccharomyces cerevisiae (strain ATCC 204508 / S288c) (Baker's yeast).